We begin with the raw amino-acid sequence, 283 residues long: Pantothenate synthetase (283 aa).

Residue 34 to 41 (MGALHDGH) coordinates ATP. H41 (proton donor) is an active-site residue. (R)-pantoate is bound at residue Q65. Q65 is a beta-alanine binding site. 152–155 (GEKD) is an ATP binding site. Q158 lines the (R)-pantoate pocket. ATP contacts are provided by residues V181 and 189–192 (MSSR).

Belongs to the pantothenate synthetase family. In terms of assembly, homodimer.

The protein resides in the cytoplasm. It catalyses the reaction (R)-pantoate + beta-alanine + ATP = (R)-pantothenate + AMP + diphosphate + H(+). Its pathway is cofactor biosynthesis; (R)-pantothenate biosynthesis; (R)-pantothenate from (R)-pantoate and beta-alanine: step 1/1. Functionally, catalyzes the condensation of pantoate with beta-alanine in an ATP-dependent reaction via a pantoyl-adenylate intermediate. In Rhodopseudomonas palustris (strain BisB18), this protein is Pantothenate synthetase.